A 70-amino-acid polypeptide reads, in one-letter code: Large ribosomal subunit protein bL31 (70 aa).

Residues C16, C18, C38, and C41 each contribute to the Zn(2+) site.

The protein belongs to the bacterial ribosomal protein bL31 family. Type A subfamily. In terms of assembly, part of the 50S ribosomal subunit. The cofactor is Zn(2+).

Binds the 23S rRNA. This Bifidobacterium longum (strain DJO10A) protein is Large ribosomal subunit protein bL31.